Consider the following 316-residue polypeptide: BTB/POZ domain-containing adapter for CUL3-mediated RhoA degradation protein 2 (316 aa).

The BTB domain maps to Lys-28–Gln-96. Over residues Glu-268 to Pro-279 the composition is skewed to polar residues. Positions Glu-268–Glu-287 are disordered. At Ser-278 the chain carries Phosphoserine. A Phosphoserine; by CK2 modification is found at Ser-280.

Belongs to the BACURD family. In terms of assembly, component of the BCR(TNFAIP1) E3 ubiquitin ligase complex, at least composed of CUL3, TNFAIP1/BACURD2 and RBX1. Interacts with RHOA; with a preference for RhoA-GDP. Interacts with RHOB. Interacts with CSNK2B. Interacts with PCNA. Post-translationally, phosphorylation at Ser-280 by CK2 facilitates the nucleus localization and increases interaction with PCNA.

It localises to the cytoplasm. The protein resides in the nucleus. The protein localises to the endosome. It functions in the pathway protein modification; protein ubiquitination. Substrate-specific adapter of a BCR (BTB-CUL3-RBX1) E3 ubiquitin-protein ligase complex involved in regulation of cytoskeleton structure. The BCR(TNFAIP1) E3 ubiquitin ligase complex mediates the ubiquitination of RHOA, leading to its degradation by the proteasome, thereby regulating the actin cytoskeleton and cell migration. Its interaction with RHOB may regulate apoptosis. May enhance the PCNA-dependent DNA polymerase delta activity. This is BTB/POZ domain-containing adapter for CUL3-mediated RhoA degradation protein 2 (Tnfaip1) from Rattus norvegicus (Rat).